The following is an 850-amino-acid chain: MFWKFDLHSSSHIDTLLERDEVTLKELMDEEDILQECKAQNRKLVEFLLKSECLEDLVTFITEEPPQDMDEKIRYKYPNLSCELLTSDVSQINDRLGEDETLLKRLYAFLLNDPPLNPLLASFFSKVLSILISRKPEQIVAFLKKKDDFVNLIIKHIGTSAIMDLLLRLLTCIEPPQLRQDVLNWLNEEKIIQRLVDIVHPSQDEDRHSNASQSLCEIIRLSRDQMLQVQNSSEPDPLLATLENKEILEQLLSNIFLKEKNESAIVSAIQILLTLLETRRPAFEGHIDLCPPGVNHSVFSVNKNVLAAIQERLPSFHQLLLDPPKTGVMKTTWGILDPPVGNTRLNVIRLIASLLQTNTHTINEELIELNTMGVILDMFFKYSWNNFLHTQVEICIALILASPGDSPEHSTISEENSAGDHVLLKHLFLKCHLIDRILEAWAMNEKRQSEGGQRYGYMGHLTRIVNCIVHSIEKGPNSVLAHQLVKDLPTDAQERWETFCTSSLSETNKRNTVDLVTTRHIHSSSDDEIEFKDPGFSQDSAIQQFGFNDEKFADQDDIGNVSFDRVSDINFSLNANESANIALFEACCKERIQQFDDGGSDEEDIWEEKNISYSQETQRRSSSGSTDSEESTDSEEEETIKQGFESSTVNHEDKMEVDANEASNWTANFDIPMETAHVANLDSDGSDVWSTEEPLSSKETDWASFSQLTSPINTKESVRSSSPVEMETSTEPVDPLSVNASAQTEVTVAMDAVSDGEEEGENADQMTETVMNGSMKETLSLTVDAKTETAVFKSEEGKLTTSHDSACKYGVVENSDTAMENPPSQPSSSSQEQRISEQIALDGASANGPV.

3 disordered regions span residues 610–652 (NISY…VNHE), 683–778 (SDGS…MKET), and 793–850 (KSEE…NGPV). Acidic residues predominate over residues 627-638 (DSEESTDSEEEE). Composition is skewed to polar residues over residues 703 to 731 (ASFSQLTSPINTKESVRSSSPVEMETSTE) and 764 to 778 (DQMTETVMNGSMKET). Residues 826-839 (PSSSSQEQRISEQI) are compositionally biased toward low complexity.

Belongs to the SAPS family.

In terms of biological role, regulatory subunit of protein phosphatase 6 (PP6). May function as a scaffolding PP6 subunit. The polypeptide is Serine/threonine-protein phosphatase 6 regulatory subunit 3-B (ppp6r3-b) (Xenopus laevis (African clawed frog)).